A 412-amino-acid chain; its full sequence is Peptidase T (412 aa).

His81 lines the Zn(2+) pocket. Asp83 is an active-site residue. A Zn(2+)-binding site is contributed by Asp144. The active-site Proton acceptor is Glu178. The Zn(2+) site is built by Glu179, Asp201, and His383.

Belongs to the peptidase M20B family. Zn(2+) serves as cofactor.

It is found in the cytoplasm. It carries out the reaction Release of the N-terminal residue from a tripeptide.. Cleaves the N-terminal amino acid of tripeptides. The sequence is that of Peptidase T from Bacillus cereus (strain ZK / E33L).